A 316-amino-acid polypeptide reads, in one-letter code: Pantothenate kinase (316 aa).

Position 99–106 (99–106) interacts with ATP; sequence GSVAVGKS.

Belongs to the prokaryotic pantothenate kinase family.

It is found in the cytoplasm. It carries out the reaction (R)-pantothenate + ATP = (R)-4'-phosphopantothenate + ADP + H(+). It functions in the pathway cofactor biosynthesis; coenzyme A biosynthesis; CoA from (R)-pantothenate: step 1/5. The sequence is that of Pantothenate kinase (coaA) from Pasteurella multocida (strain Pm70).